A 381-amino-acid polypeptide reads, in one-letter code: Alkanesulfonate monooxygenase (381 aa).

Belongs to the SsuD family. In terms of assembly, homotetramer.

It carries out the reaction an alkanesulfonate + FMNH2 + O2 = an aldehyde + FMN + sulfite + H2O + 2 H(+). Catalyzes the desulfonation of aliphatic sulfonates. This is Alkanesulfonate monooxygenase from Escherichia coli O9:H4 (strain HS).